The primary structure comprises 381 residues: Probable cyclic AMP-AMP-GMP nucleotide synthase (381 aa).

S53 and R56 together coordinate GTP. Active-site residues include D69 and D71. D69 and D71 together coordinate Mg(2+). R109 contacts GTP. D121 is a catalytic residue. Mg(2+) contacts are provided by D121 and D196. Positions 197, 204, 205, 210, and 307 each coordinate GTP. The disordered stretch occupies residues 348 to 381 (GTKFPFPGPQGGDRSGGFTAPTQPAEPQKTGRFA).

This sequence belongs to the CD-NTase family. D02 subfamily. It depends on Mg(2+) as a cofactor.

It catalyses the reaction GTP + 2 ATP = 3',3',3'-cAAG + 3 diphosphate. Functionally, cyclic nucleotide synthase (second messenger synthase) of a CBASS antivirus system. CBASS (cyclic oligonucleotide-based antiphage signaling system) provides immunity against bacteriophage. The CD-NTase protein synthesizes cyclic nucleotides in response to infection; these serve as specific second messenger signals. The signals activate a diverse range of effectors, leading to bacterial cell death and thus abortive phage infection. Its function is as follows. Cyclic nucleotide synthase, synthesizes a tricyclic nucleotide with AMP and GMP moieties, probably 3',3',3'-cyclic AMP-AMP-GMP (3'3'3'-cAAG). Controls the activity of the associated CBASS effector protein. The polypeptide is Probable cyclic AMP-AMP-GMP nucleotide synthase (Salmonella paratyphi B (Salmonella enterica subsp. enterica serovar Paratyphi B)).